The primary structure comprises 680 residues: DNA-directed RNA polymerase subunit beta' (680 aa).

Zn(2+) is bound by residues C69, C71, C87, and C90. Mg(2+) is bound by residues D489, D491, and D493.

This sequence belongs to the RNA polymerase beta' chain family. RpoC1 subfamily. As to quaternary structure, in plastids the minimal PEP RNA polymerase catalytic core is composed of four subunits: alpha, beta, beta', and beta''. When a (nuclear-encoded) sigma factor is associated with the core the holoenzyme is formed, which can initiate transcription. It depends on Mg(2+) as a cofactor. Requires Zn(2+) as cofactor.

The protein resides in the plastid. It localises to the chloroplast. The catalysed reaction is RNA(n) + a ribonucleoside 5'-triphosphate = RNA(n+1) + diphosphate. DNA-dependent RNA polymerase catalyzes the transcription of DNA into RNA using the four ribonucleoside triphosphates as substrates. In Arabidopsis thaliana (Mouse-ear cress), this protein is DNA-directed RNA polymerase subunit beta'.